The chain runs to 902 residues: MKFADHLTESAIPEWRDKYIDYKVGKKKLRRYKEKLDAEEEQSSSYRSWMPSVSVYQTAFQQREPGKSRSDGDYRSGPAFKKDYSALQREFVADFIEDWLISFQLSKCNEFYLWLLKECDKKFEVLQSQLHYYSLQKNYERDNLNRSSSNVDMSTSLYAAGLAGRSDSRVNSIDSDSRSVMYGSMPCTKEAKKPRLSLLAYCQKVLKDNRLLPSWPKRGFSLLQDLRQDASSRGRETFAFGASFLETMTTTQARNLLSNAIIEYYLYLQLVKSFRDINVTGFRKMVKKFDKTCHTRELTTFMSYARTHYTLFKHADANVQLVAQKMQQITSSQPTPTSELSSAQRDKEPITWLETQITEWFTTALTNSPKDRKHNTHKLKKLTIQYSISEQMVHRNNRSIVQMLVVGLGIGVSMTLITYTLYLGISSEETSFTHKILFPLWGGWYMVLLIAFLFLVNCFIWHRTGINYRFIMLGEIQSKNGTQFFNNDFATSKIPLKLYFLTFFIVPCAVCSMLSFALEKLTPLGFLYIGIVSFLFLCPSGLIPYWDKVVHTRKWLVVTLIRLMMSGFFPVEFGDFFLGDIICSLTYSIADIAMFFCVYSHTPNNLCGSSHSRAMGVLSCLPSYWRFMQCLRRFADSGDWFPHLLNAAKYTLGIAYNATLCAYRLSDRSEQRRTPFIVCATLNSILTSAWDLVMDWSFAHNTTSYNWLLRDDLYLAGKKNWENGSYSFSRKLVYYFAMIWDILIRFEWIVYAIAPQTIQQSAVTSFILALLEVLRRFVWIIFRVENEHVANVHLFRVTGDAPLPYPIAQVGDDSMDSSDLGSKAFSSLNDIPITPSHDNNPHSFAEPMPAYRGTFRRRSSVFENISRSIPWAHATDFQRPTVNTVDDRSPETDSESEVESIM.

An SPX domain is found at 1–303 (MKFADHLTES…HTRELTTFMS (303 aa)). The Cytoplasmic portion of the chain corresponds to 1–404 (MKFADHLTES…RNNRSIVQML (404 aa)). A phosphoserine mark is found at serine 172 and serine 179. Residues 405–425 (VVGLGIGVSMTLITYTLYLGI) traverse the membrane as a helical segment. Over 426–435 (SSEETSFTHK) the chain is Extracellular. The helical transmembrane segment at 436-456 (ILFPLWGGWYMVLLIAFLFLV) threads the bilayer. Residues 457 to 497 (NCFIWHRTGINYRFIMLGEIQSKNGTQFFNNDFATSKIPLK) lie on the Cytoplasmic side of the membrane. Residues 498-518 (LYFLTFFIVPCAVCSMLSFAL) form a helical membrane-spanning segment. The Extracellular segment spans residues 519–522 (EKLT). Residues 523 to 543 (PLGFLYIGIVSFLFLCPSGLI) form a helical membrane-spanning segment. Residues 544–554 (PYWDKVVHTRK) are Cytoplasmic-facing. The chain crosses the membrane as a helical span at residues 555–575 (WLVVTLIRLMMSGFFPVEFGD). Residue phenylalanine 576 is a topological domain, extracellular. The helical transmembrane segment at 577 to 599 (FLGDIICSLTYSIADIAMFFCVY) threads the bilayer. The Cytoplasmic portion of the chain corresponds to 600–732 (SHTPNNLCGS…NGSYSFSRKL (133 aa)). An EXS domain is found at 606-815 (LCGSSHSRAM…PIAQVGDDSM (210 aa)). Residues 733-753 (VYYFAMIWDILIRFEWIVYAI) form a helical membrane-spanning segment. Topologically, residues 754-761 (APQTIQQS) are extracellular. Residues 762 to 782 (AVTSFILALLEVLRRFVWIIF) form a helical membrane-spanning segment. The Cytoplasmic portion of the chain corresponds to 783–902 (RVENEHVANV…DSESEVESIM (120 aa)). 2 positions are modified to phosphoserine: serine 859 and serine 860. Positions 882–902 (VNTVDDRSPETDSESEVESIM) are disordered. The span at 892-902 (TDSESEVESIM) shows a compositional bias: acidic residues.

This sequence belongs to the SYG1 (TC 2.A.94) family.

The protein resides in the cell membrane. Its function is as follows. May function in G-protein coupled signal transduction. This Saccharomyces cerevisiae (strain ATCC 204508 / S288c) (Baker's yeast) protein is Protein SYG1 (SYG1).